Consider the following 1222-residue polypeptide: Serine/threonine-protein kinase WNK4 (1222 aa).

Residues 1–17 (MLAPRNTETGVHMSQTE) show a composition bias toward polar residues. The interval 1-163 (MLAPRNTETG…KEDTETQAVA (163 aa)) is disordered. A Phosphoserine modification is found at serine 95. Positions 135–152 (EPPRVPDAAARERRREQE) are enriched in basic and acidic residues. Glycyl lysine isopeptide (Lys-Gly) (interchain with G-Cter in ubiquitin) cross-links involve residues lysine 154 and lysine 172. The Protein kinase domain occupies 171-429 (LKFDIEIGRG…IQDLLTHAFF (259 aa)). Serine 181 contacts ATP. Glycyl lysine isopeptide (Lys-Gly) (interchain with G-Cter in ubiquitin) cross-links involve residues lysine 183, lysine 223, and lysine 238. Residues 251 to 254 (TELM) and lysine 301 each bind ATP. Aspartate 318 (proton acceptor) is an active-site residue. Lysine 325 is covalently cross-linked (Glycyl lysine isopeptide (Lys-Gly) (interchain with G-Cter in ubiquitin)). Phosphoserine; by autocatalysis occurs at positions 328 and 332. Residues lysine 384, lysine 390, lysine 447, and lysine 451 each participate in a glycyl lysine isopeptide (Lys-Gly) (interchain with G-Cter in ubiquitin) cross-link. The tract at residues 527–562 (LEVLPPDSGPPPATVSMTPGPPSAFPPEPEEPEADQ) is disordered. The span at 533–553 (DSGPPPATVSMTPGPPSAFPP) shows a compositional bias: pro residues. The interval 554–564 (EPEEPEADQHQ) is interaction with KLHL3. Serine 572 bears the Phosphoserine mark. 5 disordered regions span residues 591 to 612 (FLDA…PAEP), 626 to 679 (RSGP…SVSD), 747 to 809 (DAGP…GTPF), 836 to 873 (QVSS…SPLP), and 927 to 1087 (SPGL…QPSP). Positions 627-638 (SGPGSDFSPGDS) are enriched in low complexity. Positions 659–672 (NPVKTLRRRPRSRL) are enriched in basic residues. Low complexity-rich tracts occupy residues 792–809 (FSTS…GTPF) and 845–873 (APSS…SPLP). Residues 935–946 (PPAPPGPLPSMP) show a composition bias toward pro residues. Over residues 953 to 963 (DQESLSAQTAE) the composition is skewed to polar residues. Residue lysine 990 forms a Glycyl lysine isopeptide (Lys-Gly) (interchain with G-Cter in ubiquitin) linkage. The RFXV motif signature appears at 996–999 (RFQV). Position 1014 is a phosphoserine (serine 1014). The span at 1044–1056 (ETREALAESDRAA) shows a compositional bias: basic and acidic residues. A compositionally biased stretch (polar residues) spans 1076–1086 (GGSSPILSQPS). Glycyl lysine isopeptide (Lys-Gly) (interchain with G-Cter in ubiquitin) cross-links involve residues lysine 1123, lysine 1136, and lysine 1137. The segment at 1169-1222 (SKGSFPTSRRNSLQRSDLPGPGIMRRNSLSGSSTGSQEQRASKGVTFAGDVGRM) is disordered. Polar residues-rich tracts occupy residues 1172–1183 (SFPTSRRNSLQR) and 1195–1207 (NSLS…SQEQ). At serine 1196 the chain carries Phosphoserine.

The protein belongs to the protein kinase superfamily. Ser/Thr protein kinase family. WNK subfamily. In terms of assembly, interacts with the C-terminal region of KCNJ1. Interacts with WNK1 and WNK3. Interacts with KLHL3. Requires Mg(2+) as cofactor. Autophosphorylated at Ser-328 and Ser-332, promoting its activation. Phosphorylated by WNK1 and WNK3. Phosphorylated at Ser-572 in a MAP3K15/ASK3-dependent process in response to osmotic stress or hypotonic low-chloride stimulation. In terms of processing, ubiquitinated by the BCR(KLHL3) complex, leading to its degradation. Also ubiquitinated by the BCR(KLHL2) complex.

Its subcellular location is the cell junction. The protein resides in the tight junction. The enzyme catalyses L-seryl-[protein] + ATP = O-phospho-L-seryl-[protein] + ADP + H(+). The catalysed reaction is L-threonyl-[protein] + ATP = O-phospho-L-threonyl-[protein] + ADP + H(+). Activation requires autophosphorylation of Ser-328 and Ser-332. Autophosphorylation and subsequent activation is inhibited by increases in intracellular ionic strength: Cl(-) potently inhibits WNK4 kinase activity via direct binding. Also inhibited by K(+) ions. In terms of biological role, serine/threonine-protein kinase component of the WNK4-SPAK/OSR1 kinase cascade, which acts as a key regulator of ion transport in the distal nephron and blood pressure. The WNK4-SPAK/OSR1 kinase cascade is composed of WNK4, which mediates phosphorylation and activation of downstream kinases OXSR1/OSR1 and STK39/SPAK. Following activation, OXSR1/OSR1 and STK39/SPAK catalyze phosphorylation of ion cotransporters, such as SLC12A1/NKCC2, SLC12A2/NKCC1, SLC12A3/NCC, SLC12A5/KCC2 or SLC12A6/KCC3, regulating their activity. Acts as a molecular switch that regulates the balance between renal salt reabsorption and K(+) secretion by modulating the activities of renal transporters and channels, including the Na-Cl cotransporter SLC12A3/NCC and the K(+) channel, KCNJ1/ROMK. Regulates NaCl reabsorption in the distal nephron by activating the thiazide-sensitive Na-Cl cotransporter SLC12A3/NCC in distal convoluted tubule cells of kidney: activates SLC12A3/NCC in a OXSR1/OSR1- and STK39/SPAK-dependent process. Also acts as a scaffold protein independently of its protein kinase activity: negatively regulates cell membrane localization of various transporters and channels (CFTR, KCNJ1/ROMK, SLC4A4, SLC26A9 and TRPV4) by clathrin-dependent endocytosis. Also inhibits the activity of the epithelial Na(+) channel (ENaC) SCNN1A, SCNN1B, SCNN1D in a inase-independent mechanism. May also phosphorylate NEDD4L. The chain is Serine/threonine-protein kinase WNK4 from Rattus norvegicus (Rat).